The primary structure comprises 693 residues: Cleavage and polyadenylation specificity factor subunit 3-I (693 aa).

An HXHXDH motif motif is present at residues 81 to 86 (HFHIDH).

This sequence belongs to the metallo-beta-lactamase superfamily. RNA-metabolizing metallo-beta-lactamase-like family. INTS11 subfamily. As to quaternary structure, component of the CPSF complex, at least composed of CPSF160, CPSF100, CPSF73-I, CPSF73-II, CPSF30, FY and FIPS5. Interacts with CLPS3, CPSF100, CPSF160 and FY. As to expression, highly expressed in carpels. Also detected in seedlings, roots, stems, leaves, flowers and siliques.

The protein localises to the nucleus. Component of the cleavage and polyadenylation specificity factor (CPSF) complex that play a key role in pre-mRNA 3'-end formation, recognizing the AAUAAA signal sequence and interacting with poly(A) polymerase and other factors to bring about cleavage and poly(A) addition. May function as mRNA 3'-end-processing endonuclease and also be involved in the histone 3'-end pre-mRNA processing. This Arabidopsis thaliana (Mouse-ear cress) protein is Cleavage and polyadenylation specificity factor subunit 3-I (CPSF73-I).